The sequence spans 289 residues: Bifunctional protein FolD (289 aa).

NADP(+) contacts are provided by residues 165-167 and serine 190; that span reads GAS.

This sequence belongs to the tetrahydrofolate dehydrogenase/cyclohydrolase family. Homodimer.

The enzyme catalyses (6R)-5,10-methylene-5,6,7,8-tetrahydrofolate + NADP(+) = (6R)-5,10-methenyltetrahydrofolate + NADPH. It catalyses the reaction (6R)-5,10-methenyltetrahydrofolate + H2O = (6R)-10-formyltetrahydrofolate + H(+). The protein operates within one-carbon metabolism; tetrahydrofolate interconversion. In terms of biological role, catalyzes the oxidation of 5,10-methylenetetrahydrofolate to 5,10-methenyltetrahydrofolate and then the hydrolysis of 5,10-methenyltetrahydrofolate to 10-formyltetrahydrofolate. The chain is Bifunctional protein FolD from Ralstonia pickettii (strain 12J).